Consider the following 1211-residue polypeptide: RNA helicase Mov10l1 (1211 aa).

Disordered regions lie at residues 340–385 (KENS…GENG) and 674–710 (WNHA…RVGD). Polar residues-rich tracts occupy residues 345-372 (DENI…NNRG) and 674-688 (WNHA…QSTS). Over residues 694 to 710 (TMTDQAEHGTEERRVGD) the composition is skewed to basic and acidic residues. 770-777 (GPPGTGKT) is a binding site for ATP. The short motif at 886–889 (DEAG) is the DEAG box element. The disordered stretch occupies residues 1192–1211 (DPSYPVVPESTGPEKHQEPS).

This sequence belongs to the DNA2/NAM7 helicase family. SDE3 subfamily. As to quaternary structure, interacts with PIWIL1. Interacts with PIWIL2. Interacts with PIWIL4. Interacts with HSPA2. Interacts with PLD6. Specifically expressed in testis.

It is found in the cytoplasm. It carries out the reaction ATP + H2O = ADP + phosphate + H(+). ATP-dependent RNA helicase required during spermatogenesis to repress transposable elements and prevent their mobilization, which is essential for germline integrity. Acts via the piRNA metabolic process, which mediates the repression of transposable elements during meiosis by forming complexes composed of piRNAs and Piwi proteins and governs the methylation and subsequent repression of transposons. Involved in the primary piRNA metabolic process. Specifically binds to piRNA precursors and promotes the generation of intermediate piRNA processing fragments that are subsequently loaded to Piwi proteins. Acts via its ATP-dependent RNA helicase activity: displays 5'-3' RNA unwinding activity and probably mediates unwinding and funneling of single-stranded piRNA precursor transcripts to the endonuclease that catalyzes the first cleavage step of piRNA processing to generate piRNA intermediate fragments that are subsequently loaded to Piwi proteins. The protein is RNA helicase Mov10l1 of Homo sapiens (Human).